Consider the following 121-residue polypeptide: Large ribosomal subunit protein bL12 (121 aa).

The protein belongs to the bacterial ribosomal protein bL12 family. Homodimer. Part of the ribosomal stalk of the 50S ribosomal subunit. Forms a multimeric L10(L12)X complex, where L10 forms an elongated spine to which 2 to 4 L12 dimers bind in a sequential fashion. Binds GTP-bound translation factors.

In terms of biological role, forms part of the ribosomal stalk which helps the ribosome interact with GTP-bound translation factors. Is thus essential for accurate translation. The chain is Large ribosomal subunit protein bL12 from Pseudomonas fluorescens (strain Pf0-1).